A 576-amino-acid chain; its full sequence is uncharacterized protein (576 aa).

A disordered region spans residues 41–78 (EKESESKLNSKSTTLQSSDSEDWDSEENEDDITDVGVP). Positions 49–58 (NSKSTTLQSS) are enriched in low complexity. Residues 59–73 (DSEDWDSEENEDDIT) are compositionally biased toward acidic residues. 5 WD repeats span residues 87 to 126 (GHSK…ATNP), 195 to 235 (GHIA…SQLE), 248 to 288 (LSRI…KRPV), 296 to 335 (LPQQ…KCVN), and 393 to 433 (TVTA…RGVK). The interval 547–576 (SETQPTPIYQGVTEGDISSEEGNPSKKQKR) is disordered.

This is an uncharacterized protein from Schizosaccharomyces pombe (strain 972 / ATCC 24843) (Fission yeast).